The primary structure comprises 402 residues: S-adenosylmethionine synthase (402 aa).

137–142 (GQGSAD) lines the ATP pocket.

It belongs to the AdoMet synthase 2 family. The cofactor is Mg(2+).

It carries out the reaction L-methionine + ATP + H2O = S-adenosyl-L-methionine + phosphate + diphosphate. Its pathway is amino-acid biosynthesis; S-adenosyl-L-methionine biosynthesis; S-adenosyl-L-methionine from L-methionine: step 1/1. Its function is as follows. Catalyzes the formation of S-adenosylmethionine from methionine and ATP. This is S-adenosylmethionine synthase from Pyrobaculum aerophilum (strain ATCC 51768 / DSM 7523 / JCM 9630 / CIP 104966 / NBRC 100827 / IM2).